We begin with the raw amino-acid sequence, 305 residues long: Ribonuclease BN (305 aa).

H64, H66, D68, H69, H141, D212, and H270 together coordinate Zn(2+). Residue D68 is the Proton acceptor of the active site.

Belongs to the RNase Z family. RNase BN subfamily. In terms of assembly, homodimer. Requires Zn(2+) as cofactor.

Functionally, zinc phosphodiesterase, which has both exoribonuclease and endoribonuclease activities. This chain is Ribonuclease BN, found in Shigella flexneri.